The primary structure comprises 81 residues: Photosystem I iron-sulfur center (81 aa).

2 4Fe-4S ferredoxin-type domains span residues Ser-2–Trp-31 and Ile-39–Tyr-68. [4Fe-4S] cluster contacts are provided by Cys-11, Cys-14, Cys-17, Cys-21, Cys-48, Cys-51, Cys-54, and Cys-58.

In terms of assembly, the eukaryotic PSI reaction center is composed of at least 11 subunits. It depends on [4Fe-4S] cluster as a cofactor.

The protein resides in the plastid. Its subcellular location is the chloroplast thylakoid membrane. The catalysed reaction is reduced [plastocyanin] + hnu + oxidized [2Fe-2S]-[ferredoxin] = oxidized [plastocyanin] + reduced [2Fe-2S]-[ferredoxin]. In terms of biological role, apoprotein for the two 4Fe-4S centers FA and FB of photosystem I (PSI); essential for photochemical activity. FB is the terminal electron acceptor of PSI, donating electrons to ferredoxin. The C-terminus interacts with PsaA/B/D and helps assemble the protein into the PSI complex. Required for binding of PsaD and PsaE to PSI. PSI is a plastocyanin-ferredoxin oxidoreductase, converting photonic excitation into a charge separation, which transfers an electron from the donor P700 chlorophyll pair to the spectroscopically characterized acceptors A0, A1, FX, FA and FB in turn. This is Photosystem I iron-sulfur center from Spinacia oleracea (Spinach).